The sequence spans 997 residues: FIP1[III]-like protein (997 aa).

4 disordered regions span residues 250 to 272, 289 to 475, 534 to 553, and 880 to 900; these read ITSN…LNSV, AGSF…ETEG, SRSS…KEED, and QGKV…TIEQ. Over residues 261-272 the composition is skewed to polar residues; the sequence is SHSYGSKDLNSV. 4 stretches are compositionally biased toward basic and acidic residues: residues 309-323, 334-346, 367-379, and 388-404; these read TPSD…KEES, SVER…DRIR, ESLK…DQRE, and RLAE…EDSG. Positions 397–404 match the Nuclear localization signal motif; sequence IKRGEDSG. A compositionally biased stretch (polar residues) spans 534-547; that stretch reads SRSSFDLNQRNSRS. The stretch at 930–963 forms a coiled coil; that stretch reads EIIEEVKGVEIDNERIQESLKKMEKRRERFKGTK.

This sequence belongs to the FIP1 family. As to quaternary structure, component of the cleavage and polyadenylation specificity factor (CPSF) complex. Forms a complex with cleavage and polyadenylation specificity factor (CPSF) subunits CLPS5, FIPS5, PAPS4, PCFS1, CSTF64 and CPSF30.

Its subcellular location is the nucleus. In terms of biological role, component of the cleavage and polyadenylation specificity factor (CPSF) complex that plays a key role in pre-mRNA 3'-end formation, recognizing the AAUAAA signal sequence and interacting with poly(A) polymerase and other factors to bring about cleavage and poly(A) addition. FIP1L1 contributes to poly(A) site recognition and stimulates poly(A) addition. Binds to U-rich RNA sequence elements surrounding the poly(A) site. May act to tether poly(A) polymerase to the CPSF complex. The chain is FIP1[III]-like protein from Arabidopsis thaliana (Mouse-ear cress).